Consider the following 594-residue polypeptide: CRISPR-associated DNA-binding protein Cas12m (594 aa).

Positions 1–85 (MSRLEARTRY…EKVRQVMVFE (85 aa)) are recognition domain (REC1-N). The tract at residues 86–153 (SETTKKIKEL…ERSFIFEARK (68 aa)) is recognition domain (REC2). Positions 154-211 (QELAQLEKERWAVVKELGKGSGLYWCNLEDVVNSYDIGRKKAKAAGGEMRFHRWDGTG) are recognition domain (REC1-C). Positions 212–314 (KVTVRFQKGL…RYKLNLVLEI (103 aa)) are wedge domain (WED). The tract at residues 315-329 (LGENTNRILPALEGT) is linker. The interval 330 to 540 (AAIDLGWRTV…KNHVEFTYVP (211 aa)) is ruvC-I. Positions 541-575 (AENTTITCHKCGHKEKFDAAAQIIHTCSTCGELWD) are target nucleic-acid binding (TNB). Zn(2+) contacts are provided by Cys548, Cys551, Cys567, and Cys570. The segment at 576–594 (QDYNAAKNLLAFSQKGGVK) is ruvC-II. Asp577 contributes to the Mg(2+) binding site.

It belongs to the CRISPR-associated DNA-binding protein Cas12m family. Mg(2+) serves as cofactor. It depends on Zn(2+) as a cofactor.

In terms of biological role, CRISPR (clustered regularly interspaced short palindromic repeat), is an adaptive immune system that provides protection against mobile genetic elements (viruses, transposable elements and conjugative plasmids). CRISPR clusters contain sequences complementary to antecedent mobile elements and target invading nucleic acids. CRISPR clusters are transcribed and processed into CRISPR RNA (crRNA). Recognizes a short motif in the CRISPR repeat sequences (the 5' PAM or protospacer adjacent motif, 5'-C/TCN-3' in this organism) to help distinguish self versus nonself, as targets within the bacterial CRISPR locus do not have PAMs. Upon expression in E.coli as a CRISPR locus inhibits plasmid propagation when targeted to regions essential for plasmid propagation (replication origin but not a selectable marker), probably by inhibiting transcription. Cas12m-crRNA binds DNA in a PAM-dependent, crRNA-guided fashion. Upon expression in E.coli as a CRISPR region preferentially binds to its associated crRNA. Probably required for pre-crRNA processing to mature crRNA. The polypeptide is CRISPR-associated DNA-binding protein Cas12m (Thermanaerosceptrum fracticalcis).